A 253-amino-acid chain; its full sequence is 3-deoxy-manno-octulosonate cytidylyltransferase (253 aa).

This sequence belongs to the KdsB family.

The protein resides in the cytoplasm. It carries out the reaction 3-deoxy-alpha-D-manno-oct-2-ulosonate + CTP = CMP-3-deoxy-beta-D-manno-octulosonate + diphosphate. It participates in nucleotide-sugar biosynthesis; CMP-3-deoxy-D-manno-octulosonate biosynthesis; CMP-3-deoxy-D-manno-octulosonate from 3-deoxy-D-manno-octulosonate and CTP: step 1/1. The protein operates within bacterial outer membrane biogenesis; lipopolysaccharide biosynthesis. Its function is as follows. Activates KDO (a required 8-carbon sugar) for incorporation into bacterial lipopolysaccharide in Gram-negative bacteria. This is 3-deoxy-manno-octulosonate cytidylyltransferase from Geotalea daltonii (strain DSM 22248 / JCM 15807 / FRC-32) (Geobacter daltonii).